The sequence spans 491 residues: Pre-glycoprotein polyprotein GP complex (491 aa).

A lipid anchor (N-myristoyl glycine; by host) is attached at Gly-2. At 2 to 17 (GQIVTFFQEVPHVIEE) the chain is on the extracellular side. The helical transmembrane segment at 18–33 (VMNIVLIALSVLAVLK) threads the bilayer. Over 34-58 (GLYNFATCGLVGLVTFLLLCGRSCT) the chain is Cytoplasmic. Zn(2+) is bound at residue Cys-57. Residues 59–432 (TSLYKGVYEL…QGKTPLGLVD (374 aa)) are Extracellular-facing. Asn-79, Asn-89, Asn-99, Asn-109, Asn-119, and Asn-167 each carry an N-linked (GlcNAc...) asparagine; by host glycan. 6 disulfide bridges follow: Cys-86–Cys-231, Cys-118–Cys-155, Cys-180–Cys-212, Cys-279–Cys-292, Cys-301–Cys-310, and Cys-364–Cys-385. Asn-224 carries N-linked (GlcNAc...) asparagine; by host glycosylation. N-linked (GlcNAc...) asparagine; by host glycosylation is found at Asn-365, Asn-373, Asn-390, and Asn-395. The helical transmembrane segment at 433–453 (LFVFSTSFYLISIFLHLVKIP) threads the bilayer. Over 454–491 (THRHIVGKSCPKPHRLNHMGICSCGLYKQPGVPVKWKR) the chain is Cytoplasmic. Positions 455, 457, 463, 467, 475, and 477 each coordinate Zn(2+).

It belongs to the arenaviridae GPC protein family. Interacts with glycoprotein G2. Part of the GP complex (GP-C) together with glycoprotein G1 and glycoprotein G2. The GP-complex interacts with protein Z, which interacts with ribonucleocapsid; these interactions may induce virion budding. In terms of assembly, homotrimer; disulfide-linked. In pre-fusion state, G1 homotrimers bind G2 homotrimers via ionic interactions. Part of the GP complex (GP-C) together with glycoprotein G2 and the stable signal peptide. Interacts with the primary host receptor DAG1 on the cell surface; this interaction occurs at pH 8.0 but not at pH 6.0 and below. Upon virus internalization and at endosomal pH, interacts with the host lysosomal protein LAMP1; this interaction mediates G1 dissociation from GP-C and membrane fusion. The GP-complex interacts with protein Z, which interacts with ribonucleocapsid; these interactions may induce virion budding. As to quaternary structure, homotrimer. Interacts with the stable signal peptide. In pre-fusion state, G2 homotrimers bind G1 homotrimers via ionic interactions. Part of the GP complex (GP-C) together with glycoprotein G1 and the stable signal peptide. Acidification in the endosome triggers rearrangements, which ultimately leads to a 6 helix bundle formed by the two heptad repeat domains (HR1 and HR2) in post-fusion state. The GP-complex interacts with protein Z, which interacts with ribonucleocapsid; these interactions may induce virion budding. In terms of processing, specific enzymatic cleavages in vivo yield mature proteins. GP-C polyprotein is cleaved in the endoplasmic reticulum by the host protease MBTPS1. Only cleaved glycoprotein is incorporated into virions. Post-translationally, the SSP remains stably associated with the GP complex following cleavage by signal peptidase and plays crucial roles in the trafficking of GP through the secretory pathway. Myristoylation is necessary for GP2-mediated fusion activity.

The protein localises to the virion membrane. Its subcellular location is the host endoplasmic reticulum membrane. The protein resides in the host Golgi apparatus membrane. It is found in the host cell membrane. Its function is as follows. Functions as a cleaved signal peptide that is retained as the third component of the GP complex (GP-C). Helps to stabilize the spike complex in its native conformation. The SSP is required for efficient glycoprotein expression, post-translational maturation cleavage of G1 and G2, glycoprotein transport to the cell surface plasma membrane, formation of infectious virus particles, and acid pH-dependent glycoprotein-mediated cell fusion. In terms of biological role, forms the virion spikes together with glycoprotein G2. The glycoprotein spike trimers are connected to the underlying matrix. Interacts with the host receptor. Mediates virus attachment to the host primary receptor alpha-dystroglycan DAG1 (alpha-DG) at the cell surface. This attachment induces virion internalization apparently through macropinocytosis. Following endocytosis, there is a pH-dependent switch from binding DAG1 to the host lysosomal receptor LAMP1. This latter binding triggers the dissociation of GP1, exposing the fusion subunit, GP2, such that fusion can occur. Down-modulates host DAG1. Forms the virion spikes together with glycoprotein G1. The glycoprotein spike trimers are connected to the underlying matrix. Class I viral fusion protein that directs fusion of viral and host endosomal membranes, leading to delivery of the nucleocapsid into the cytoplasm. Membrane fusion is mediated by irreversible conformational changes induced by acidification. In Homo sapiens (Human), this protein is Pre-glycoprotein polyprotein GP complex.